Reading from the N-terminus, the 307-residue chain is Pseudouridine-5'-phosphate glycosidase (307 aa).

The Proton donor role is filled by Glu28. Substrate contacts are provided by Lys89 and Val109. Mn(2+) is bound at residue Asp141. Substrate is bound at residue 143–145 (SAD). Residue Lys162 is the Nucleophile of the active site.

The protein belongs to the pseudouridine-5'-phosphate glycosidase family. Homotrimer. Requires Mn(2+) as cofactor.

It catalyses the reaction D-ribose 5-phosphate + uracil = psi-UMP + H2O. Catalyzes the reversible cleavage of pseudouridine 5'-phosphate (PsiMP) to ribose 5-phosphate and uracil. Functions biologically in the cleavage direction, as part of a pseudouridine degradation pathway. The polypeptide is Pseudouridine-5'-phosphate glycosidase (Alkaliphilus metalliredigens (strain QYMF)).